The sequence spans 621 residues: Chaperone protein HscA homolog (621 aa).

Belongs to the heat shock protein 70 family.

In terms of biological role, chaperone involved in the maturation of iron-sulfur cluster-containing proteins. Has a low intrinsic ATPase activity which is markedly stimulated by HscB. The polypeptide is Chaperone protein HscA homolog (Acidithiobacillus ferrooxidans (strain ATCC 23270 / DSM 14882 / CIP 104768 / NCIMB 8455) (Ferrobacillus ferrooxidans (strain ATCC 23270))).